Here is a 138-residue protein sequence, read N- to C-terminus: Basic phospholipase A2 homolog G6K49 (138 aa).

Residues 1–16 (MRTLWIMAVLLLGVEG) form the signal peptide. 7 disulfides stabilise this stretch: Cys42–Cys132, Cys44–Cys60, Cys59–Cys112, Cys65–Cys138, Cys66–Cys105, Cys73–Cys98, and Cys91–Cys103. The segment at 122-133 (KKHRVTVKFLCK) is important for membrane-damaging activities in eukaryotes and bacteria; heparin-binding.

The protein belongs to the phospholipase A2 family. Group II subfamily. K49 sub-subfamily. Homodimer; non-covalently linked. In terms of tissue distribution, expressed by the venom gland.

The protein localises to the secreted. In terms of biological role, snake venom phospholipase A2 (PLA2) that lacks enzymatic activity. Displays myotoxic activities. A model of myotoxic mechanism has been proposed: an apo Lys49-PLA2 is activated by the entrance of a hydrophobic molecule (e.g. fatty acid) at the hydrophobic channel of the protein leading to a reorientation of a monomer. This reorientation causes a transition between 'inactive' to 'active' states, causing alignment of C-terminal and membrane-docking sites (MDoS) side-by-side and putting the membrane-disruption sites (MDiS) in the same plane, exposed to solvent and in a symmetric position for both monomers. The MDoS region stabilizes the toxin on membrane by the interaction of charged residues with phospholipid head groups. Subsequently, the MDiS region destabilizes the membrane with penetration of hydrophobic residues. This insertion causes a disorganization of the membrane, allowing an uncontrolled influx of ions (i.e. calcium and sodium), and eventually triggering irreversible intracellular alterations and cell death. The polypeptide is Basic phospholipase A2 homolog G6K49 (Calloselasma rhodostoma (Malayan pit viper)).